A 123-amino-acid polypeptide reads, in one-letter code: uncharacterized protein (123 aa).

Residues Phe17–Ser74 form a disordered region. Thr30 carries the phosphothreonine modification. Low complexity predominate over residues Lys32–Pro43. Residues Lys44–Glu54 are compositionally biased toward basic and acidic residues. Ser62 is modified (phosphoserine).

This is an uncharacterized protein from Homo sapiens (Human).